A 346-amino-acid polypeptide reads, in one-letter code: Methylthioribose-1-phosphate isomerase (346 aa).

Substrate is bound by residues 48 to 50, arginine 91, and glutamine 196; that span reads RGA. The Proton donor role is filled by aspartate 237. 247-248 is a substrate binding site; it reads NK.

This sequence belongs to the eIF-2B alpha/beta/delta subunits family. MtnA subfamily.

It catalyses the reaction 5-(methylsulfanyl)-alpha-D-ribose 1-phosphate = 5-(methylsulfanyl)-D-ribulose 1-phosphate. It participates in amino-acid biosynthesis; L-methionine biosynthesis via salvage pathway; L-methionine from S-methyl-5-thio-alpha-D-ribose 1-phosphate: step 1/6. Functionally, catalyzes the interconversion of methylthioribose-1-phosphate (MTR-1-P) into methylthioribulose-1-phosphate (MTRu-1-P). This Thermosipho africanus (strain TCF52B) protein is Methylthioribose-1-phosphate isomerase.